Consider the following 367-residue polypeptide: Alanine racemase (367 aa).

The Proton acceptor; specific for D-alanine role is filled by Lys-40. Lys-40 is modified (N6-(pyridoxal phosphate)lysine). Position 136 (Arg-136) interacts with substrate. Tyr-263 (proton acceptor; specific for L-alanine) is an active-site residue. Substrate is bound at residue Met-310.

This sequence belongs to the alanine racemase family. It depends on pyridoxal 5'-phosphate as a cofactor.

It catalyses the reaction L-alanine = D-alanine. The protein operates within amino-acid biosynthesis; D-alanine biosynthesis; D-alanine from L-alanine: step 1/1. Its function is as follows. Catalyzes the interconversion of L-alanine and D-alanine. May also act on other amino acids. The chain is Alanine racemase (alr) from Streptococcus pneumoniae serotype 19F (strain G54).